The sequence spans 25 residues: U11-ctenitoxin-Co1b (25 aa).

2 disulfide bridges follow: C4/C18 and C11/C22.

Monomer. In terms of tissue distribution, expressed by the venom gland.

It localises to the secreted. Functionally, neurotoxin. This is U11-ctenitoxin-Co1b from Ctenus ornatus (Brazilian spider).